The primary structure comprises 462 residues: Cathepsin F (462 aa).

Residues 1–19 form the signal peptide; the sequence is MAPLLQLLWLLTLLSTVAL. Positions 20 to 248 are cleaved as a propeptide — activation peptide; it reads SPVPAKPWAD…MSPAKSINDL (229 aa). N-linked (GlcNAc...) asparagine glycosylation is found at N35, N138, and N173. 2 cysteine pairs are disulfide-bonded: C270/C311 and C304/C344. The active site involves C273. N-linked (GlcNAc...) asparagine glycosylation is found at N345 and N356. A disulfide bridge connects residues C402 and C450. Residue H409 is part of the active site. The N-linked (GlcNAc...) asparagine glycan is linked to N418. Residue N429 is part of the active site.

It belongs to the peptidase C1 family.

The protein resides in the lysosome. It catalyses the reaction The recombinant enzyme cleaves synthetic substrates with Phe and Leu (better than Val) in P2, with high specificity constant (kcat/Km) comparable to that of cathepsin L.. Functionally, thiol protease which is believed to participate in intracellular degradation and turnover of proteins. Has also been implicated in tumor invasion and metastasis. The sequence is that of Cathepsin F (Ctsf) from Mus musculus (Mouse).